Here is a 377-residue protein sequence, read N- to C-terminus: tRNA(Met) cytidine acetate ligase (377 aa).

Residues 7–20 (ITEY…HLYH), G101, N152, and R179 each bind ATP.

Belongs to the TmcAL family.

The protein localises to the cytoplasm. The enzyme catalyses cytidine(34) in elongator tRNA(Met) + acetate + ATP = N(4)-acetylcytidine(34) in elongator tRNA(Met) + AMP + diphosphate. Its function is as follows. Catalyzes the formation of N(4)-acetylcytidine (ac(4)C) at the wobble position of elongator tRNA(Met), using acetate and ATP as substrates. First activates an acetate ion to form acetyladenylate (Ac-AMP) and then transfers the acetyl group to tRNA to form ac(4)C34. The sequence is that of tRNA(Met) cytidine acetate ligase from Oenococcus oeni (strain ATCC BAA-331 / PSU-1).